We begin with the raw amino-acid sequence, 206 residues long: Adenylate kinase (206 aa).

Gly10–Thr15 contributes to the ATP binding site. The segment at Ser30–Val59 is NMP. AMP is bound by residues Thr31, Arg36, Gly57 to Val59, Gly85 to Arg88, and Gln92. The segment at Asn126–Asp142 is LID. Arg127 serves as a coordination point for ATP. AMP contacts are provided by Arg139 and Arg150. Met178 contributes to the ATP binding site.

The protein belongs to the adenylate kinase family. In terms of assembly, monomer.

The protein localises to the cytoplasm. It carries out the reaction AMP + ATP = 2 ADP. The protein operates within purine metabolism; AMP biosynthesis via salvage pathway; AMP from ADP: step 1/1. Its function is as follows. Catalyzes the reversible transfer of the terminal phosphate group between ATP and AMP. Plays an important role in cellular energy homeostasis and in adenine nucleotide metabolism. This chain is Adenylate kinase, found in Nitrobacter winogradskyi (strain ATCC 25391 / DSM 10237 / CIP 104748 / NCIMB 11846 / Nb-255).